Here is a 1181-residue protein sequence, read N- to C-terminus: MFFYLSKKISIPNNVKLQCVSWNKEQGFIACGGEDGLLKVLKLETQTDDAKLRGLAAPSNLSMNQTLEGHSGSVQVVTWNEQYQKLTTSDENGLIIVWMLYKGSWIEEMINNRNKSVVRSMSWNADGQKICIVYEDGAVIVGSVDGNRIWGKDLKGIQLSHVTWSADSKVLLFGMANGEIHIYDNQGNFMIKMKLSCLVNVTGAISIAGIHWYHGTEGYVEPDCPCLAVCFDNGRCQIMRHENDQNPVLIDTGMYVVGIQWNHMGSVLAVAGFQKAAMQDKDVNIVQFYTPFGEHLGTLKVPGKEISALSWEGGGLKIALAVDSFIYFANIRPNYKWGYCSNTVVYAYTRPDRPEYCVVFWDTKNNEKYVKYVKGLISITTCGDFCILATKADENHPQEENEMETFGATFVLVLCNSIGTPLDPKYIDIVPLFVAMTKTHVIAASKEAFYTWQYRVAKKLTALEINQITRSRKEGRERIYHVDDTPSGSMDGVLDYSKTIQGTRDPICAITASDKILIVGRESGTIQRYSLPNVGLIQKYSLNCRAYQLSLNCNSSRLAIIDISGVLTFFDLDARVTDSTGQQVVGELLKLERRDVWDMKWAKDNPDLFAMMEKTRMYVFRNLDPEEPIQTSGYICNFEDLEIKSVLLDEILKDPEHPNKDYLINFEIRSLRDSRALIEKVGIKDASQFIEDNPHPRLWRLLAEAALQKLDLYTAEQAFVRCKDYQGIKFVKRLGKLLSESMKQAEVVGYFGRFEEAERTYLEMDRRDLAIGLRLKLGDWFRVLQLLKTGSGDADDSLLEQANNAIGDYFADRQKWLNAVQYYVQGRNQERLAECYYMLEDYEGLENLAISLPENHKLLPEIAQMFVRVGMCEQAVTAFLKCSQPKAAVDTCVHLNQWNKAVELAKNHSMKEIGSLLARYASHLLEKNKTLDAIELYRKANYFFDAAKLMFKIADEEAKKGSKPLRVKKLYVLSALLIEQYHEQMKNAQRGKVKGKSSEATSALAGLLEEEVLSTTDRFTDNAWRGAEAYHFFILAQRQLYEGCVDTALKTALHLKDYEDIIPPVEIYSLLALCACASRAFGTCSKAFIKLKSLETLSSEQKQQYEDLALEIFTKHTSKDNRKPELDSLMEGGEGKLPTCVATGSPITEYQFWMCSVCKHGVLAQEISHYSFCPLCHSPVG.

WD repeat units follow at residues 4–43, 61–100, 105–143, 147–185, 193–241, and 246–288; these read YLSK…VLKL, LSMN…VWML, WIEE…IVGS, NRIW…IYDN, MKLS…IMRH, and NPVL…IVQF.

As to quaternary structure, component of the IFT complex A (IFT-A) complex. IFT-A complex is divided into a core subcomplex composed of IFT122:IFT140:WDR19 which is associated with TULP3 and a peripheral subcomplex composed of IFT43:WDR35:TTC21B. Interacts directy with IFT122, ITF43 and TTC21B. Interacts with IFT43. Interacts with CFAP61.

It is found in the cytoplasm. The protein localises to the cytoskeleton. It localises to the microtubule organizing center. The protein resides in the centrosome. Its subcellular location is the cilium axoneme. It is found in the cilium basal body. Its function is as follows. As a component of the IFT complex A (IFT-A), a complex required for retrograde ciliary transport and entry into cilia of G protein-coupled receptors (GPCRs), it is involved in ciliogenesis and ciliary protein trafficking. May promote CASP3 activation and TNF-stimulated apoptosis. In Homo sapiens (Human), this protein is WD repeat-containing protein 35.